A 186-amino-acid polypeptide reads, in one-letter code: Threonylcarbamoyl-AMP synthase (186 aa).

The YrdC-like domain occupies 3–186; sequence ILSLSECVDR…IINGSLIRHG (184 aa).

This sequence belongs to the SUA5 family. TsaC subfamily.

Its subcellular location is the cytoplasm. It catalyses the reaction L-threonine + hydrogencarbonate + ATP = L-threonylcarbamoyladenylate + diphosphate + H2O. Functionally, required for the formation of a threonylcarbamoyl group on adenosine at position 37 (t(6)A37) in tRNAs that read codons beginning with adenine. Catalyzes the conversion of L-threonine, HCO(3)(-)/CO(2) and ATP to give threonylcarbamoyl-AMP (TC-AMP) as the acyladenylate intermediate, with the release of diphosphate. In Buchnera aphidicola subsp. Baizongia pistaciae (strain Bp), this protein is Threonylcarbamoyl-AMP synthase.